The sequence spans 241 residues: Small ribosomal subunit protein uS3 (241 aa).

The KH type-2 domain maps to 39–107 (IRTYLKKELY…PLSVNIKEEK (69 aa)). The interval 214-241 (AEVKEEQQKEGARRPKRAPKRENSGKAE) is disordered. Residues 215–226 (EVKEEQQKEGAR) are compositionally biased toward basic and acidic residues.

Belongs to the universal ribosomal protein uS3 family. In terms of assembly, part of the 30S ribosomal subunit. Forms a tight complex with proteins S10 and S14.

Functionally, binds the lower part of the 30S subunit head. Binds mRNA in the 70S ribosome, positioning it for translation. The protein is Small ribosomal subunit protein uS3 of Sulfurimonas denitrificans (strain ATCC 33889 / DSM 1251) (Thiomicrospira denitrificans (strain ATCC 33889 / DSM 1251)).